Reading from the N-terminus, the 264-residue chain is Sororin (264 aa).

A disordered region spans residues Met1 to Pro45. Phosphoserine is present on residues Ser20, Ser32, Ser34, Ser78, and Ser82. The KEN box signature appears at Lys87–Asn89. Thr97 is subject to Phosphothreonine. Ser106 carries the post-translational modification Phosphoserine. Thr110, Thr114, and Thr159 each carry phosphothreonine. An FGF motif motif is present at residues Phe166 to Phe168. Ser222 bears the Phosphoserine mark. Residues Leu242–Glu264 form a C-terminal Sororin domain region.

The protein belongs to the sororin family. Interacts with the APC/C complex. Interacts with the chromatin-bound cohesin complex; the interaction is indirect, occurs after DNA replication and requires acetylation of the cohesin component SMC3. Interacts (via the FGF motif) with PDS5A and PDS5B; the interaction is direct and prevents the interaction of PDS5A with WAPL. Phosphorylated. Phosphorylation, as cells enter mitosis, disrupts the interaction with PDS5A and relieves the inhibition of WAPL by CDCA5. In terms of processing, ubiquitinated by the APC/C complex in G1, leading to its degradation.

The protein localises to the nucleus. It is found in the chromosome. It localises to the cytoplasm. Its function is as follows. Regulator of sister chromatid cohesion in mitosis stabilizing cohesin complex association with chromatin. May antagonize the action of WAPL which stimulates cohesin dissociation from chromatin. Cohesion ensures that chromosome partitioning is accurate in both meiotic and mitotic cells and plays an important role in DNA repair. Required for efficient DNA double-stranded break repair. The chain is Sororin (Cdca5) from Mus musculus (Mouse).